We begin with the raw amino-acid sequence, 1685 residues long: Phosphatidylinositol 4-phosphate 3-kinase C2 domain-containing subunit alpha (1685 aa).

2 disordered regions span residues 1-33 (MAQI…EALQ) and 41-60 (KLQK…LSSS). Alanine 2 carries the N-acetylalanine modification. The segment at 2–142 (AQISSNSGFK…FRPTIQRGQW (141 aa)) is interaction with clathrin; sufficient to induce clathrin assembly. Over residues 19 to 31 (EPTRAKDVDKEEA) the composition is skewed to basic and acidic residues. Residues 49–60 (TDNQRGFELSSS) are compositionally biased toward polar residues. Phosphoserine is present on residues serine 60, serine 108, serine 259, serine 327, and serine 338. One can recognise a PI3K-RBD domain in the interval 419 to 507 (NASVKVSIDI…DTEIRLQLLT (89 aa)). Serine 628 bears the Phosphoserine mark. In terms of domain architecture, C2 PI3K-type spans 680–839 (TTEQLQFTIF…ERIVLQVDFP (160 aa)). A PIK helical domain is found at 859–1035 (QHNLETLEND…EHVLGALLSV (177 aa)). The PI3K/PI4K catalytic domain occupies 1103–1381 (SIKSCSFFSS…LIESSLGSIA (279 aa)). Positions 1109 to 1115 (FFSSNAV) are G-loop. The segment at 1245-1253 (GICDRHNDN) is catalytic loop. Residues 1264–1290 (HIDFGKFLGHAQMFGTFKRDRAPFVLT) form an activation loop region. The PX domain maps to 1420–1536 (GRIKEVSVFT…TFFHPLLRDE (117 aa)). The interaction with PtdIns(4,5)P2-containing membranes stretch occupies residues 1486–1491 (RMVLGR). Serine 1551 bears the Phosphoserine mark. The C2 domain maps to 1554-1677 (TPGQIGGAVK…NLSKETVKWY (124 aa)). A Nuclear localization signal motif is present at residues 1607 to 1618 (SKRKTKISRKTR).

This sequence belongs to the PI3/PI4-kinase family. Part of a complex with ERBB2 and EGFR. Interacts with clathrin trimers. Interacts with SBF2/MTMR13. Ca(2+) serves as cofactor. It depends on Mg(2+) as a cofactor. Phosphorylated on Ser-259 during mitosis and upon UV irradiation; which does not change enzymatic activity but leads to proteasomal degradation. Phosphorylated upon insulin stimulation; which may lead to enzyme activation.

The protein resides in the cell membrane. It is found in the cytoplasmic vesicle. The protein localises to the clathrin-coated vesicle. It localises to the nucleus. Its subcellular location is the cytoplasm. The protein resides in the golgi apparatus. It is found in the trans-Golgi network. The catalysed reaction is a 1,2-diacyl-sn-glycero-3-phospho-(1D-myo-inositol 4-phosphate) + ATP = a 1,2-diacyl-sn-glycero-3-phospho-(1D-myo-inositol-3,4-bisphosphate) + ADP + H(+). It catalyses the reaction a 1,2-diacyl-sn-glycero-3-phospho-(1D-myo-inositol) + ATP = a 1,2-diacyl-sn-glycero-3-phospho-(1D-myo-inositol-3-phosphate) + ADP + H(+). It carries out the reaction a 1,2-diacyl-sn-glycero-3-phospho-(1D-myo-inositol-4,5-bisphosphate) + ATP = a 1,2-diacyl-sn-glycero-3-phospho-(1D-myo-inositol-3,4,5-trisphosphate) + ADP + H(+). Its activity is regulated as follows. Only slightly inhibited by wortmannin and LY294002. Activated by clathrin and insulin. Generates phosphatidylinositol 3-phosphate (PtdIns3P) and phosphatidylinositol 3,4-bisphosphate (PtdIns(3,4)P2) that act as second messengers. Has a role in several intracellular trafficking events. Functions in insulin signaling and secretion. Required for translocation of the glucose transporter SLC2A4/GLUT4 to the plasma membrane and glucose uptake in response to insulin-mediated RHOQ activation. Regulates insulin secretion through two different mechanisms: involved in glucose-induced insulin secretion downstream of insulin receptor in a pathway that involves AKT1 activation and TBC1D4/AS160 phosphorylation, and participates in the late step of insulin granule exocytosis probably in insulin granule fusion. Synthesizes PtdIns3P in response to insulin signaling. Functions in clathrin-coated endocytic vesicle formation and distribution. Regulates dynamin-independent endocytosis, probably by recruiting EEA1 to internalizing vesicles. In neurosecretory cells synthesizes PtdIns3P on large dense core vesicles. Participates in calcium induced contraction of vascular smooth muscle by regulating myosin light chain (MLC) phosphorylation through a mechanism involving Rho kinase-dependent phosphorylation of the MLCP-regulatory subunit MYPT1. May play a role in the EGF signaling cascade. May be involved in mitosis and UV-induced damage response. Required for maintenance of normal renal structure and function by supporting normal podocyte function. Involved in the regulation of ciliogenesis and trafficking of ciliary components. The protein is Phosphatidylinositol 4-phosphate 3-kinase C2 domain-containing subunit alpha (PIK3C2A) of Pongo abelii (Sumatran orangutan).